Reading from the N-terminus, the 316-residue chain is Protoheme IX farnesyltransferase (316 aa).

The next 9 membrane-spanning stretches (helical) occupy residues 32–52 (VMSL…GHIN), 53–73 (PVLG…SGAL), 93–113 (IPAG…LSGF), 116–136 (VILG…TIFF), 152–172 (NIVI…ACVT), 180–200 (TVLF…LALF), 221–241 (VTKH…VLPS), 252–271 (LVAA…VWRM), and 289–309 (IFYL…AILV).

The protein belongs to the UbiA prenyltransferase family. Protoheme IX farnesyltransferase subfamily.

It localises to the cell inner membrane. It carries out the reaction heme b + (2E,6E)-farnesyl diphosphate + H2O = Fe(II)-heme o + diphosphate. Its pathway is porphyrin-containing compound metabolism; heme O biosynthesis; heme O from protoheme: step 1/1. Its function is as follows. Converts heme B (protoheme IX) to heme O by substitution of the vinyl group on carbon 2 of heme B porphyrin ring with a hydroxyethyl farnesyl side group. The chain is Protoheme IX farnesyltransferase from Rhizobium etli (strain ATCC 51251 / DSM 11541 / JCM 21823 / NBRC 15573 / CFN 42).